The chain runs to 509 residues: Maturase K (509 aa).

The protein belongs to the intron maturase 2 family. MatK subfamily.

It is found in the plastid. The protein localises to the chloroplast. Usually encoded in the trnK tRNA gene intron. Probably assists in splicing its own and other chloroplast group II introns. This chain is Maturase K, found in Banksia cuneata (Quairading banksia).